Here is a 373-residue protein sequence, read N- to C-terminus: 3-isopropylmalate dehydrogenase (373 aa).

82–93 (GPKWGTGAVRPE) is an NAD(+) binding site. Substrate-binding residues include Arg-100, Arg-110, Arg-139, and Asp-231. Residues Asp-231 and Asp-260 each coordinate Mg(2+). 295–306 (GSAPDLPENKVN) serves as a coordination point for NAD(+).

This sequence belongs to the isocitrate and isopropylmalate dehydrogenases family. As to quaternary structure, homodimer. Mg(2+) is required as a cofactor. The cofactor is Mn(2+).

It is found in the cytoplasm. It carries out the reaction (2R,3S)-3-isopropylmalate + NAD(+) = 4-methyl-2-oxopentanoate + CO2 + NADH. Its pathway is amino-acid biosynthesis; L-leucine biosynthesis; L-leucine from 3-methyl-2-oxobutanoate: step 3/4. Its function is as follows. Catalyzes the oxidation of 3-carboxy-2-hydroxy-4-methylpentanoate (3-isopropylmalate) to 3-carboxy-4-methyl-2-oxopentanoate. The product decarboxylates to 4-methyl-2 oxopentanoate. This Scheffersomyces stipitis (strain ATCC 58785 / CBS 6054 / NBRC 10063 / NRRL Y-11545) (Yeast) protein is 3-isopropylmalate dehydrogenase (LEU2).